Consider the following 422-residue polypeptide: L-2-hydroxyglutarate dehydrogenase (422 aa).

It belongs to the L2HGDH family. FAD is required as a cofactor.

Its subcellular location is the cell inner membrane. It carries out the reaction (S)-2-hydroxyglutarate + a quinone = a quinol + 2-oxoglutarate. The protein operates within amino-acid degradation. In terms of biological role, catalyzes the dehydrogenation of L-2-hydroxyglutarate (L2HG) to alpha-ketoglutarate and couples to the respiratory chain by feeding electrons from the reaction into the membrane quinone pool. Functions in a L-lysine degradation pathway that proceeds via cadaverine, glutarate and L-2-hydroxyglutarate. Also displays some oxidase activity in vitro on L-2-hydroxyglutarate with O2 as the electron acceptor, but this activity is most likely not physiological. This Escherichia coli O17:K52:H18 (strain UMN026 / ExPEC) protein is L-2-hydroxyglutarate dehydrogenase.